A 429-amino-acid chain; its full sequence is MKLQKPKGTQDILPAESAKWQYVEGFAREIFKRYNYAEVRTPIFEHYEVISRSVGDTTDIVTKEMYDFYDKGDRHITLRPEGTAPVVRSYVENKLFAPEVQKPSKFYYMGPMFRYERPQAGRLRQFHQIGVECFGSSNPATDVETIVMAAHFLKEIGIQGVKLHLNTLGNPESRAAYRQALIDYLTPLKETLSKDSQRRLEENPLRVLDSKEKEDKVAVENAPSILDFLDEESQTHFDAVRQMLENLGVDYIIDTNMVRGLDYYNHTIFEFITEIEGNDLTVCAGGRYDGLVAYFGGPETAGFGFGLGVERLLLILEKQGVALPIENALDVYIAVLGDGANVKALELVQALRQQGFKAERDYLNRKLKAQFKSADVFAAKTLITLGESEVESGQVTVKNNQTREEVQVSLETISQNFSEIFEKLGFYTQ.

This sequence belongs to the class-II aminoacyl-tRNA synthetase family. Homodimer.

The protein localises to the cytoplasm. The enzyme catalyses tRNA(His) + L-histidine + ATP = L-histidyl-tRNA(His) + AMP + diphosphate + H(+). The polypeptide is Histidine--tRNA ligase (Streptococcus pneumoniae (strain Taiwan19F-14)).